A 274-amino-acid chain; its full sequence is Anamorsin homolog (274 aa).

Residues 1 to 154 (MDRTRKQCSV…KKPSWKIGSS (154 aa)) are N-terminal SAM-like domain. Residues 154-185 (SFALKKSTKGSVKVNLDDDLIDEDSLLTEEDM) form a linker region. [2Fe-2S] cluster contacts are provided by Cys-196, Cys-205, Cys-208, and Cys-210. The tract at residues 196–210 (CEVGSTRKACKNCTC) is fe-S binding site A. 4 residues coordinate [4Fe-4S] cluster: Cys-235, Cys-238, Cys-246, and Cys-249. 2 short sequence motifs (cx2C motif) span residues 235 to 238 (CGSC) and 246 to 249 (CSTC). Residues 235–249 (CGSCGLGDAFRCSTC) form a fe-S binding site B region.

Belongs to the anamorsin family. Monomer. It depends on [2Fe-2S] cluster as a cofactor. [4Fe-4S] cluster serves as cofactor.

The protein localises to the cytoplasm. The protein resides in the mitochondrion intermembrane space. In terms of biological role, component of the cytosolic iron-sulfur (Fe-S) protein assembly (CIA) machinery. Required for the maturation of extramitochondrial Fe-S proteins. Part of an electron transfer chain functioning in an early step of cytosolic Fe-S biogenesis, facilitating the de novo assembly of a [4Fe-4S] cluster on the cytosolic Fe-S scaffold complex. Electrons are transferred from NADPH via a FAD- and FMN-containing diflavin oxidoreductase. Together with the diflavin oxidoreductase, also required for the assembly of the diferric tyrosyl radical cofactor of ribonucleotide reductase (RNR), probably by providing electrons for reduction during radical cofactor maturation in the catalytic small subunit. The chain is Anamorsin homolog from Ricinus communis (Castor bean).